The chain runs to 243 residues: Anti-H(O) lectin 1 (243 aa).

Asparagine 10 carries an N-linked (GlcNAc...) asparagine; partial glycan. N-linked (GlcNAc...) asparagine glycosylation is present at asparagine 116. Residues glutamate 126 and aspartate 128 each coordinate Mn(2+). Positions 128, 135, and 138 each coordinate Ca(2+). Mn(2+) contacts are provided by aspartate 138 and histidine 143.

Belongs to the leguminous lectin family.

Functionally, L-fucose specific lectin. The polypeptide is Anti-H(O) lectin 1 (Ulex europaeus (Furze)).